We begin with the raw amino-acid sequence, 275 residues long: 4-deoxy-L-threo-5-hexosulose-uronate ketol-isomerase (275 aa).

Positions 193, 195, 200, and 242 each coordinate Zn(2+).

It belongs to the KduI family. It depends on Zn(2+) as a cofactor.

It carries out the reaction 5-dehydro-4-deoxy-D-glucuronate = 3-deoxy-D-glycero-2,5-hexodiulosonate. The protein operates within glycan metabolism; pectin degradation; 2-dehydro-3-deoxy-D-gluconate from pectin: step 4/5. Catalyzes the isomerization of 5-dehydro-4-deoxy-D-glucuronate to 3-deoxy-D-glycero-2,5-hexodiulosonate. This Bacillus licheniformis (strain ATCC 14580 / DSM 13 / JCM 2505 / CCUG 7422 / NBRC 12200 / NCIMB 9375 / NCTC 10341 / NRRL NRS-1264 / Gibson 46) protein is 4-deoxy-L-threo-5-hexosulose-uronate ketol-isomerase.